Reading from the N-terminus, the 354-residue chain is Lipoyl synthase, mitochondrial (354 aa).

7 residues coordinate [4Fe-4S] cluster: C91, C96, C102, C122, C126, C129, and S337. A Radical SAM core domain is found at 107–326 (DDSLATATIM…AEYSKKLGFL (220 aa)).

Belongs to the radical SAM superfamily. Lipoyl synthase family. [4Fe-4S] cluster is required as a cofactor.

The protein localises to the mitochondrion. The enzyme catalyses [[Fe-S] cluster scaffold protein carrying a second [4Fe-4S](2+) cluster] + N(6)-octanoyl-L-lysyl-[protein] + 2 oxidized [2Fe-2S]-[ferredoxin] + 2 S-adenosyl-L-methionine + 4 H(+) = [[Fe-S] cluster scaffold protein] + N(6)-[(R)-dihydrolipoyl]-L-lysyl-[protein] + 4 Fe(3+) + 2 hydrogen sulfide + 2 5'-deoxyadenosine + 2 L-methionine + 2 reduced [2Fe-2S]-[ferredoxin]. It participates in protein modification; protein lipoylation via endogenous pathway; protein N(6)-(lipoyl)lysine from octanoyl-[acyl-carrier-protein]: step 2/2. Its function is as follows. Catalyzes the radical-mediated insertion of two sulfur atoms into the C-6 and C-8 positions of the octanoyl moiety bound to the lipoyl domains of lipoate-dependent enzymes, thereby converting the octanoylated domains into lipoylated derivatives. The protein is Lipoyl synthase, mitochondrial of Caenorhabditis elegans.